The sequence spans 255 residues: Putative glutamine amidotransferase YafJ (255 aa).

The active-site For GATase activity is the cysteine 2. Residues 2–251 (CELLGMSANV…PGEWRLFCLG (250 aa)) enclose the Glutamine amidotransferase type-2 domain.

In Escherichia coli (strain K12), this protein is Putative glutamine amidotransferase YafJ (yafJ).